The primary structure comprises 140 residues: Pro-vaccinia growth factor (140 aa).

A signal peptide spans 1–18; it reads MSMKYLMLLFAAMIIRSF. Residues 19 to 100 lie on the Extracellular side of the membrane; sequence ADSGNAIETT…SENPNTTTSY (82 aa). N-linked (GlcNAc...) asparagine; by host glycosylation occurs at N34. Positions 41–81 constitute an EGF-like domain; sequence AIRLCGPEGDGYCLHGDCIHARDIDGMYCRCSHGYTGIRCQ. Intrachain disulfides connect C45/C58, C53/C69, and C71/C80. N-linked (GlcNAc...) asparagine; by host glycosylation is present at N95. A helical membrane pass occupies residues 101 to 121; the sequence is IPSPGIVLVLVGIIIITCCSL. The Cytoplasmic portion of the chain corresponds to 122–140; the sequence is SVYRFTRRTKLPIQDMVVP.

Belongs to the orthopoxvirus OPG019 family. Vaccinia growth factor interacts with host EGFR and promotes EGFR dimerization.

The protein resides in the host membrane. It localises to the secreted. Functionally, stimulates cellular proliferation (hyperplasia)and mobility around infected cells to promote rapid and efficient spread of infection. This effect is beneficial for virus replication in vivo, because poxviruses replicate possibly better in proliferating cells than in quiescent cells. Acts by binding host EGFR, inducing its dimerization, autophosphorylation and leading to activation of several cellular pathways regulating cell proliferation or cell survival. The activation by host EGFR of mitogen activated protein kinases (MAPK) and extracellular-signal regulated kinases (ERK) are essential for the positive effect of vaccinia growth factor on poxvirus virulence in vivo. The sequence is that of Pro-vaccinia growth factor (OPG019) from Vaccinia virus (strain L-IVP) (VACV).